Reading from the N-terminus, the 445-residue chain is UPF0210 protein SSU05_0296 (445 aa).

This sequence belongs to the UPF0210 family. As to quaternary structure, homodimer.

The polypeptide is UPF0210 protein SSU05_0296 (Streptococcus suis (strain 05ZYH33)).